Consider the following 89-residue polypeptide: Small ribosomal subunit protein uS15 (89 aa).

Belongs to the universal ribosomal protein uS15 family. In terms of assembly, part of the 30S ribosomal subunit. Forms a bridge to the 50S subunit in the 70S ribosome, contacting the 23S rRNA.

One of the primary rRNA binding proteins, it binds directly to 16S rRNA where it helps nucleate assembly of the platform of the 30S subunit by binding and bridging several RNA helices of the 16S rRNA. Functionally, forms an intersubunit bridge (bridge B4) with the 23S rRNA of the 50S subunit in the ribosome. The sequence is that of Small ribosomal subunit protein uS15 from Nitratidesulfovibrio vulgaris (strain DP4) (Desulfovibrio vulgaris).